A 202-amino-acid chain; its full sequence is ATP-dependent Clp protease proteolytic subunit (202 aa).

Catalysis depends on Ser101, which acts as the Nucleophile. His126 is an active-site residue.

It belongs to the peptidase S14 family. In terms of assembly, component of the chloroplastic Clp protease core complex.

Its subcellular location is the plastid. The protein resides in the chloroplast stroma. It catalyses the reaction Hydrolysis of proteins to small peptides in the presence of ATP and magnesium. alpha-casein is the usual test substrate. In the absence of ATP, only oligopeptides shorter than five residues are hydrolyzed (such as succinyl-Leu-Tyr-|-NHMec, and Leu-Tyr-Leu-|-Tyr-Trp, in which cleavage of the -Tyr-|-Leu- and -Tyr-|-Trp bonds also occurs).. Cleaves peptides in various proteins in a process that requires ATP hydrolysis. Has a chymotrypsin-like activity. Plays a major role in the degradation of misfolded proteins. In Acorus calamus (Sweet flag), this protein is ATP-dependent Clp protease proteolytic subunit.